Here is a 167-residue protein sequence, read N- to C-terminus: Myelin basic protein (167 aa).

Ala-1 carries the N-acetylalanine modification. A phosphoserine mark is found at Ser-7 and Ser-12. Phosphotyrosine is present on Tyr-14. Thr-17 is modified (phosphothreonine). Ser-19 carries the post-translational modification Phosphoserine. Position 20 is a phosphothreonine (Thr-20). Arg-25 and Arg-31 each carry citrulline. Thr-35 bears the Phosphothreonine mark. Ser-40 is modified (phosphoserine). Omega-N-methylarginine occurs at positions 43 and 49. Positions Phe-45 to His-87 are induces experimental autoimmune encephalomyelitis (EAE) 1. A disordered region spans residues Gly-46–Ser-114. A Phosphoserine modification is found at Ser-56. At Thr-67 the chain carries Phosphothreonine. Tyr-69 is modified (phosphotyrosine). A Phosphoserine modification is found at Ser-76. 2 positions are modified to phosphothreonine: Thr-94 and Thr-97. Gln-102 carries the deamidated glutamine modification. Arg-106 carries the omega-N-methylarginine; alternate modification. Position 106 is a symmetric dimethylarginine; alternate (Arg-106). Ser-114 bears the Phosphoserine mark. Positions Ser-114–Pro-122 are induces experimental autoimmune encephalomyelitis (EAE) 2. Position 121 is an N6-acetyllysine (Lys-121). Arg-129 carries the post-translational modification Citrulline. A disordered region spans residues Gly-136–Arg-167. The residue at position 144 (Gln-144) is a Deamidated glutamine. A Citrulline modification is found at Arg-156. Ser-158 bears the Phosphoserine mark. A Phosphoserine; by UHMK1 modification is found at Ser-162. Position 167 is a citrulline (Arg-167).

The protein belongs to the myelin basic protein family. As to quaternary structure, homodimer. Post-translationally, at least 5 charge isomers; C1 (the most cationic, least modified, and most abundant form), C2, C3, C4 and C5 (the least cationic form); are produced as a result of optional post-translational modifications such as phosphorylation of serine or threonine residues, deamidation of glutamine or asparagine residues, citrullination and methylation of arginine residues. C1 and C2 are unphosphorylated, C3 and C4 are monophosphorylated and C5 is phosphorylated at two positions. In terms of processing, phosphorylated by TAOK2, VRK2, MAPK11, MAPK12, MAPK14 and MINK1. Proteolytically cleaved in B cell lysosomes by cathepsin CTSG which degrades the major immunogenic MBP epitope and prevents the activation of MBP-specific autoreactive T cells. In terms of tissue distribution, found in both the central and the peripheral nervous system.

The protein localises to the myelin membrane. Its function is as follows. Is, with PLP, the most abundant protein component of the myelin membrane in the CNS. Has a role in both the formation and stabilization of this compact multilayer arrangement of bilayers. Each splice variant and charge isomer may have a specialized function in the assembly of an optimized, biochemically functional myelin membrane. The chain is Myelin basic protein (MBP) from Cavia porcellus (Guinea pig).